The sequence spans 338 residues: Bifunctional methylenetetrahydrofolate dehydrogenase/cyclohydrolase 2, mitochondrial (338 aa).

Residues 89 to 93 (YVRNK) and 136 to 138 (VQL) contribute to the substrate site. Residues 205-207 (GRS) and arginine 238 contribute to the NAD(+) site. 314–318 (PGGVG) is a substrate binding site.

The protein belongs to the tetrahydrofolate dehydrogenase/cyclohydrolase family. The cofactor is Mg(2+). Widely expressed.

The protein resides in the mitochondrion inner membrane. The enzyme catalyses (6R)-5,10-methylene-5,6,7,8-tetrahydrofolate + NADP(+) = (6R)-5,10-methenyltetrahydrofolate + NADPH. It catalyses the reaction (6R)-5,10-methylene-5,6,7,8-tetrahydrofolate + NAD(+) = (6R)-5,10-methenyltetrahydrofolate + NADH. It carries out the reaction (6R)-5,10-methenyltetrahydrofolate + H2O = (6R)-10-formyltetrahydrofolate + H(+). It functions in the pathway one-carbon metabolism; tetrahydrofolate interconversion. In terms of biological role, bifunctional mitochondrial folate-interconverting enzyme that has both NAD/NADP-dependent methylenetetrahydrofolate dehydrogenase and methenyltetrahydrofolate cyclohydrolase activities. Functionally, has no NAD/NADP-dependent methylenetetrahydrofolate dehydrogenase activity. The protein is Bifunctional methylenetetrahydrofolate dehydrogenase/cyclohydrolase 2, mitochondrial of Rattus norvegicus (Rat).